A 201-amino-acid polypeptide reads, in one-letter code: Small ribosomal subunit protein uS4 (201 aa).

One can recognise an S4 RNA-binding domain in the interval 91–151 (SRLDNVVYRA…DKSINTLPFE (61 aa)).

It belongs to the universal ribosomal protein uS4 family. As to quaternary structure, part of the 30S ribosomal subunit. Contacts protein S5. The interaction surface between S4 and S5 is involved in control of translational fidelity.

Functionally, one of the primary rRNA binding proteins, it binds directly to 16S rRNA where it nucleates assembly of the body of the 30S subunit. With S5 and S12 plays an important role in translational accuracy. This is Small ribosomal subunit protein uS4 from Mycolicibacterium gilvum (strain PYR-GCK) (Mycobacterium gilvum (strain PYR-GCK)).